Here is a 133-residue protein sequence, read N- to C-terminus: Holo-[acyl-carrier-protein] synthase (133 aa).

Positions 8 and 57 each coordinate Mg(2+).

The protein belongs to the P-Pant transferase superfamily. AcpS family. Mg(2+) is required as a cofactor.

It is found in the cytoplasm. It catalyses the reaction apo-[ACP] + CoA = holo-[ACP] + adenosine 3',5'-bisphosphate + H(+). In terms of biological role, transfers the 4'-phosphopantetheine moiety from coenzyme A to a Ser of acyl-carrier-protein. The protein is Holo-[acyl-carrier-protein] synthase of Caulobacter sp. (strain K31).